The primary structure comprises 129 residues: Small ribosomal subunit protein uS11 (129 aa).

The protein belongs to the universal ribosomal protein uS11 family. As to quaternary structure, part of the 30S ribosomal subunit. Interacts with proteins S7 and S18. Binds to IF-3.

Its function is as follows. Located on the platform of the 30S subunit, it bridges several disparate RNA helices of the 16S rRNA. Forms part of the Shine-Dalgarno cleft in the 70S ribosome. The polypeptide is Small ribosomal subunit protein uS11 (Bacteroides thetaiotaomicron (strain ATCC 29148 / DSM 2079 / JCM 5827 / CCUG 10774 / NCTC 10582 / VPI-5482 / E50)).